Here is a 442-residue protein sequence, read N- to C-terminus: Tubulin beta chain (442 aa).

8 residues coordinate GTP: Gln11, Glu69, Ser138, Gly142, Thr143, Gly144, Asn204, and Asn226. A Mg(2+)-binding site is contributed by Glu69. Residues 421-442 are disordered; it reads EYQQYQDATAEDEEEMDEEQME. The span at 429-442 shows a compositional bias: acidic residues; the sequence is TAEDEEEMDEEQME.

The protein belongs to the tubulin family. Dimer of alpha and beta chains. A typical microtubule is a hollow water-filled tube with an outer diameter of 25 nm and an inner diameter of 15 nM. Alpha-beta heterodimers associate head-to-tail to form protofilaments running lengthwise along the microtubule wall with the beta-tubulin subunit facing the microtubule plus end conferring a structural polarity. Microtubules usually have 13 protofilaments but different protofilament numbers can be found in some organisms and specialized cells. Requires Mg(2+) as cofactor.

The protein resides in the cytoplasm. It localises to the cytoskeleton. Tubulin is the major constituent of microtubules, a cylinder consisting of laterally associated linear protofilaments composed of alpha- and beta-tubulin heterodimers. Microtubules grow by the addition of GTP-tubulin dimers to the microtubule end, where a stabilizing cap forms. Below the cap, tubulin dimers are in GDP-bound state, owing to GTPase activity of alpha-tubulin. In Stylonychia lemnae (Ciliate), this protein is Tubulin beta chain (TUBB1).